Consider the following 125-residue polypeptide: Late histone H2A.1 (125 aa).

Basic residues predominate over residues 1–18 (MSGRGKGKAKGTKSKTRS). The tract at residues 1 to 21 (MSGRGKGKAKGTKSKTRSSRA) is disordered. N-acetylserine is present on serine 2. At serine 2 the chain carries Phosphoserine. Residue glutamine 104 is modified to N5-methylglutamine. Residue lysine 119 forms a Glycyl lysine isopeptide (Lys-Gly) (interchain with G-Cter in ubiquitin) linkage.

Belongs to the histone H2A family. In terms of assembly, the nucleosome is a histone octamer containing two molecules each of H2A, H2B, H3 and H4 assembled in one H3-H4 heterotetramer and two H2A-H2B heterodimers. The octamer wraps approximately 147 bp of DNA. Post-translationally, monoubiquitination of Lys-119 gives a specific tag for epigenetic transcriptional repression. In terms of processing, phosphorylation of Ser-2 directly represses transcription.

It localises to the nucleus. Its subcellular location is the chromosome. In terms of biological role, core component of nucleosome. Nucleosomes wrap and compact DNA into chromatin, limiting DNA accessibility to the cellular machineries which require DNA as a template. Histones thereby play a central role in transcription regulation, DNA repair, DNA replication and chromosomal stability. DNA accessibility is regulated via a complex set of post-translational modifications of histones, also called histone code, and nucleosome remodeling. This Psammechinus miliaris (Green sea urchin) protein is Late histone H2A.1.